The primary structure comprises 60 residues: Large ribosomal subunit protein uL30 (60 aa).

Belongs to the universal ribosomal protein uL30 family. In terms of assembly, part of the 50S ribosomal subunit.

This chain is Large ribosomal subunit protein uL30, found in Bacillus cereus (strain G9842).